Consider the following 327-residue polypeptide: Pyruvate dehydrogenase E1 component subunit beta (327 aa).

E60 contributes to the thiamine diphosphate binding site. 4 residues coordinate K(+): I113, A161, I162, and N166.

As to quaternary structure, heterodimer of an alpha and a beta chain. It depends on thiamine diphosphate as a cofactor.

The protein localises to the plastid. It localises to the chloroplast. The catalysed reaction is N(6)-[(R)-lipoyl]-L-lysyl-[protein] + pyruvate + H(+) = N(6)-[(R)-S(8)-acetyldihydrolipoyl]-L-lysyl-[protein] + CO2. Functionally, the pyruvate dehydrogenase complex catalyzes the overall conversion of pyruvate to acetyl-CoA and CO(2). It contains multiple copies of three enzymatic components: pyruvate dehydrogenase (E1), dihydrolipoamide acetyltransferase (E2) and lipoamide dehydrogenase (E3). The protein is Pyruvate dehydrogenase E1 component subunit beta (pdhB) of Mesostigma viride (Green alga).